A 387-amino-acid polypeptide reads, in one-letter code: Gamma-butyrobetaine dioxygenase (387 aa).

4 residues coordinate Zn(2+): Cys38, Cys40, Cys43, and His82. Fe cation-binding residues include His202, Asp204, and His347. A Phosphoserine modification is found at Ser351.

The protein belongs to the gamma-BBH/TMLD family. The cofactor is Fe(2+). L-ascorbate serves as cofactor.

The protein resides in the cytoplasm. The enzyme catalyses 4-(trimethylamino)butanoate + 2-oxoglutarate + O2 = carnitine + succinate + CO2. It participates in amine and polyamine biosynthesis; carnitine biosynthesis. Functionally, catalyzes the formation of L-carnitine from gamma-butyrobetaine. This is Gamma-butyrobetaine dioxygenase (Bbox1) from Mus musculus (Mouse).